A 191-amino-acid polypeptide reads, in one-letter code: Iron-sulfur flavoprotein (191 aa).

Positions 47, 50, 53, and 59 each coordinate [4Fe-4S] cluster.

This sequence belongs to the SsuE family. Isf subfamily. In terms of assembly, homodimer. FMN is required as a cofactor. It depends on [4Fe-4S] cluster as a cofactor.

In terms of biological role, redox-active protein probably involved in electron transport during fermentation of acetate to methane. This Methanosarcina thermophila protein is Iron-sulfur flavoprotein (isf).